The following is a 961-amino-acid chain: Phosphofurin acidic cluster sorting protein 1 (961 aa).

Over residues 1–19 the composition is skewed to gly residues; the sequence is MAERGGAGGGPGGAGGGSS. Disordered stretches follow at residues 1–70 and 76–95; these read MAER…SSST and VAVA…RTPA. Position 2 is an N-acetylalanine (A2). The span at 20–30 shows a compositional bias: low complexity; that stretch reads QRGSGVAQSPQ. S28 bears the Phosphoserine mark. A compositionally biased stretch (pro residues) spans 31–46; it reads QQPPQQPSQPQQPTPP. T44 is subject to Phosphothreonine. A compositionally biased stretch (low complexity) spans 51-70; sequence ATSSSSSTSAAAASSSSSST. Position 249 is a phosphotyrosine (Y249). Over residues 260–271 the composition is skewed to basic and acidic residues; sequence GIKSKLSDRSPD. Disordered regions lie at residues 260–297 and 375–426; these read GIKS…LHGQ and NPSD…GKDT. Acidic residues predominate over residues 274–291; that stretch reads NYSEEEEESFSSEQEGSD. Positions 351–375 form a coiled coil; sequence HVSREQIREVEEDLDELYDSLEMYN. 2 positions are modified to phosphoserine: S377 and S379. Positions 404–426 are enriched in polar residues; it reads MSQSSSQTEIGSLNSKGSLGKDT. Phosphoserine occurs at positions 428 and 493. Disordered regions lie at residues 475–540 and 758–802; these read EKVK…HSTQ and SPST…SMSS. The residue at position 502 (T502) is a Phosphothreonine. Phosphoserine is present on residues S517, S526, S527, S529, and S532. The segment covering 768 to 802 has biased composition (low complexity); sequence SPVVSLTVPSTSPPSSSGLSRDATATPPSSPSMSS.

It belongs to the PACS family. In terms of assembly, associates with AP-1 and AP-3 but not with AP-2 complexes. Interacts with FURIN. Forms a ternary complex with furin and AP-1. Interacts with PKD2 (via acidic region). Interacts with SORL1. Interacts with WDR37.

The protein localises to the golgi apparatus. It localises to the trans-Golgi network. Its function is as follows. Coat protein that is involved in the localization of trans-Golgi network (TGN) membrane proteins that contain acidic cluster sorting motifs. Controls the endosome-to-Golgi trafficking of furin and mannose-6-phosphate receptor by connecting the acidic-cluster-containing cytoplasmic domain of these molecules with the adapter-protein complex-1 (AP-1) of endosomal clathrin-coated membrane pits. Required for normal ER Ca2+ handling in lymphocytes. Together with WDR37, it plays an essential role in lymphocyte development, quiescence and survival. Required for stabilizing peripheral lymphocyte populations. In Rattus norvegicus (Rat), this protein is Phosphofurin acidic cluster sorting protein 1 (Pacs1).